Reading from the N-terminus, the 459-residue chain is Alpha,alpha-trehalose-phosphate synthase [UDP-forming] (459 aa).

The D-glucose 6-phosphate site is built by Tyr86 and Asp140. Positions 262 and 267 each coordinate UDP. Positions 262 and 267 each coordinate UDP-alpha-D-glucose. Arg300 lines the D-glucose 6-phosphate pocket. UDP-alpha-D-glucose is bound at residue Asp361–Glu369. Residue Leu365–Glu369 coordinates UDP.

Belongs to the glycosyltransferase 20 family. Component of the trehalose synthase complex.

It is found in the cytoplasm. The enzyme catalyses D-glucose 6-phosphate + UDP-alpha-D-glucose = alpha,alpha-trehalose 6-phosphate + UDP + H(+). Synthase catalytic subunit of the trehalose synthase complex that catalyzes the production of trehalose from glucose-6-phosphate and UDP-alpha-D-glucose in a two step process. Can function independently of the complex. The polypeptide is Alpha,alpha-trehalose-phosphate synthase [UDP-forming] (TPS1) (Encephalitozoon cuniculi (strain GB-M1) (Microsporidian parasite)).